The primary structure comprises 291 residues: Glycinyltransferase (291 aa).

Glutamate 243 is a catalytic residue.

It belongs to the thymidine aminotransferase family.

It catalyses the reaction 5-phosphomethyl-dUMP in DNA + glycine = 5-N(alpha)-glycyl-dTMP in DNA + phosphate. Transfers glycine to 5-phosphomethyl-2'-deoxyuridine (5-PmdU) to produce 5-Nalpha-glycinylthymidine (Nalpha-GlyT) as a step in the pathway leading to thymidine hypermodifications in the viral genome. As a final result of the pathway of hypermodification, 5-aminoethyl-2'-deoxyuridine (5-NedU) substitutes for about 30% of thymidines in the viral DNA. These modifications probably prevent degradation of viral genome by the host restriction-modification antiviral defense system. The chain is Glycinyltransferase from Pseudomonas phage M6.